Reading from the N-terminus, the 144-residue chain is Translation initiation factor 5A (144 aa).

Position 38 is a hypusine (lysine 38).

It belongs to the eIF-5A family.

It localises to the cytoplasm. Functionally, functions by promoting the formation of the first peptide bond. In Nanoarchaeum equitans (strain Kin4-M), this protein is Translation initiation factor 5A.